The chain runs to 161 residues: Large ribosomal subunit protein uL15 (161 aa).

Positions 1-39 (MTKLNELAPREGSTKGRMRVGRGPGSGKGKTAGRGVKGQ) are disordered. Over residues 22 to 36 (RGPGSGKGKTAGRGV) the composition is skewed to gly residues.

Belongs to the universal ribosomal protein uL15 family. In terms of assembly, part of the 50S ribosomal subunit.

In terms of biological role, binds to the 23S rRNA. This chain is Large ribosomal subunit protein uL15, found in Caulobacter vibrioides (strain ATCC 19089 / CIP 103742 / CB 15) (Caulobacter crescentus).